The chain runs to 351 residues: Mediator of RNA polymerase II transcription subunit 18 (351 aa).

The disordered stretch occupies residues 153–231; that stretch reads GNGDPIDIDT…LPQSLSNGVS (79 aa). Over residues 163–204 the composition is skewed to basic and acidic residues; the sequence is NNDKQGDNNTDKPKQEHDGKLPEAIDEDIIKNGDEKKTTHDD. Positions 205–216 are enriched in acidic residues; sequence NDSDIMEIDEPN. A compositionally biased stretch (polar residues) spans 217–231; the sequence is PETQTLPQSLSNGVS.

Belongs to the Mediator complex subunit 18 family. In terms of assembly, component of the Mediator complex.

It is found in the nucleus. Its function is as follows. Component of the Mediator complex, a coactivator involved in the regulated transcription of nearly all RNA polymerase II-dependent genes. Mediator functions as a bridge to convey information from gene-specific regulatory proteins to the basal RNA polymerase II transcription machinery. Mediator is recruited to promoters by direct interactions with regulatory proteins and serves as a scaffold for the assembly of a functional preinitiation complex with RNA polymerase II and the general transcription factors. The polypeptide is Mediator of RNA polymerase II transcription subunit 18 (SRB5) (Candida albicans (strain SC5314 / ATCC MYA-2876) (Yeast)).